The chain runs to 158 residues: UPF0735 ACT domain-containing protein Bsph_3944 (158 aa).

Residues 80–155 (TVFLQLQDRK…FVESAEVISS (76 aa)) form the ACT domain.

Belongs to the UPF0735 family.

In Lysinibacillus sphaericus (strain C3-41), this protein is UPF0735 ACT domain-containing protein Bsph_3944.